The sequence spans 608 residues: DNA mismatch repair protein MutL (608 aa).

It belongs to the DNA mismatch repair MutL/HexB family.

In terms of biological role, this protein is involved in the repair of mismatches in DNA. It is required for dam-dependent methyl-directed DNA mismatch repair. May act as a 'molecular matchmaker', a protein that promotes the formation of a stable complex between two or more DNA-binding proteins in an ATP-dependent manner without itself being part of a final effector complex. This chain is DNA mismatch repair protein MutL, found in Elusimicrobium minutum (strain Pei191).